Reading from the N-terminus, the 48-residue chain is Toxin CSTX-15 (48 aa).

4 disulfides stabilise this stretch: Cys3–Cys18, Cys10–Cys27, Cys17–Cys42, and Cys29–Cys40.

Belongs to the neurotoxin 19 (CSTX) family. 12 subfamily. In terms of assembly, heterodimer of A and B chains; disulfide-linked. In terms of processing, contains 4 disulfide bonds. In terms of tissue distribution, expressed by the venom gland.

It is found in the secreted. The polypeptide is Toxin CSTX-15 (Cupiennius salei (American wandering spider)).